Reading from the N-terminus, the 439-residue chain is 3-phosphoshikimate 1-carboxyvinyltransferase (439 aa).

3-phosphoshikimate-binding residues include lysine 31, serine 32, and arginine 36. Lysine 31 contributes to the phosphoenolpyruvate binding site. Residues glycine 103 and arginine 131 each coordinate phosphoenolpyruvate. The 3-phosphoshikimate site is built by serine 175, glutamine 177, aspartate 322, and lysine 349. Phosphoenolpyruvate is bound at residue glutamine 177. Residue aspartate 322 is the Proton acceptor of the active site. 2 residues coordinate phosphoenolpyruvate: arginine 353 and arginine 397.

The protein belongs to the EPSP synthase family. Monomer.

The protein resides in the cytoplasm. The enzyme catalyses 3-phosphoshikimate + phosphoenolpyruvate = 5-O-(1-carboxyvinyl)-3-phosphoshikimate + phosphate. Its pathway is metabolic intermediate biosynthesis; chorismate biosynthesis; chorismate from D-erythrose 4-phosphate and phosphoenolpyruvate: step 6/7. Its function is as follows. Catalyzes the transfer of the enolpyruvyl moiety of phosphoenolpyruvate (PEP) to the 5-hydroxyl of shikimate-3-phosphate (S3P) to produce enolpyruvyl shikimate-3-phosphate and inorganic phosphate. In Clostridium tetani (strain Massachusetts / E88), this protein is 3-phosphoshikimate 1-carboxyvinyltransferase.